The primary structure comprises 452 residues: Protoheme IX farnesyltransferase, mitochondrial (452 aa).

A mitochondrion-targeting transit peptide spans 1 to 27 (MSLVIQPLLMRALNPNLSSILISGRGF). The next 7 helical transmembrane spans lie at 152–172 (VLVMLSAICSYALSPYPATVL), 235–255 (ILWLGVNPTVAFLGFSNIALY), 267–287 (IINTWVGALVGAIPPLMGWAA), 291–311 (LSHPGAWCLAGLLYAWQFPHF), 341–361 (VALRYSLLMFPLCFGLSYFNV), 364–386 (WYYQLDSAFVNAWMSLWAFKFYF), and 417–437 (TFWVSVLHLPAVLILAILHKK).

It belongs to the UbiA prenyltransferase family.

The protein localises to the mitochondrion membrane. Converts protoheme IX and farnesyl diphosphate to heme O. The sequence is that of Protoheme IX farnesyltransferase, mitochondrial (COX10) from Kluyveromyces lactis (strain ATCC 8585 / CBS 2359 / DSM 70799 / NBRC 1267 / NRRL Y-1140 / WM37) (Yeast).